A 33-amino-acid chain; its full sequence is Gaegurin-1 (33 aa).

The cysteines at positions 27 and 33 are disulfide-linked.

It belongs to the frog skin active peptide (FSAP) family. Brevinin subfamily. In terms of assembly, monomer. Expressed by the skin glands.

It localises to the secreted. In terms of biological role, has a non-hemolytic activity. Has a broad spectrum of activity against both Gram-positive and Gram-negative bacteria, fungi and protozoa. The polypeptide is Gaegurin-1 (GGN1) (Glandirana rugosa (Japanese wrinkled frog)).